The chain runs to 429 residues: S-adenosylmethionine synthase (429 aa).

Residue glutamate 9 participates in Mg(2+) binding. An ATP-binding site is contributed by histidine 15. K(+) is bound at residue glutamate 43. L-methionine contacts are provided by glutamate 56 and glutamine 99. Residues 167–169, 235–238, aspartate 246, 252–253, alanine 269, lysine 273, and lysine 277 each bind ATP; these read DGK, SGRF, and RK. L-methionine is bound at residue aspartate 246. L-methionine is bound at residue lysine 277.

This sequence belongs to the AdoMet synthase family. In terms of assembly, homotetramer. Mn(2+) is required as a cofactor. Requires Mg(2+) as cofactor. It depends on Co(2+) as a cofactor. The cofactor is K(+).

It localises to the cytoplasm. The catalysed reaction is L-methionine + ATP + H2O = S-adenosyl-L-methionine + phosphate + diphosphate. Its pathway is amino-acid biosynthesis; S-adenosyl-L-methionine biosynthesis; S-adenosyl-L-methionine from L-methionine: step 1/1. Catalyzes the formation of S-adenosylmethionine from methionine and ATP. The reaction comprises two steps that are both catalyzed by the same enzyme: formation of S-adenosylmethionine (AdoMet) and triphosphate, and subsequent hydrolysis of the triphosphate. The chain is S-adenosylmethionine synthase (SAMS) from Carica papaya (Papaya).